The sequence spans 754 residues: Glutathione biosynthesis bifunctional protein GshAB (754 aa).

The glutamate--cysteine ligase stretch occupies residues 1–332 (MTLNQLLQKL…QGHALNEKIA (332 aa)). The ATP-grasp domain maps to 488–746 (KKILADASFP…ITTKILDKLF (259 aa)). Residue 515-573 (PLIKDKQIVVKPKSTNFGLGISIFQEPASLDNYQKALEIAFAEDTSVLVEEFIPGTEYR) coordinates ATP. The Mg(2+) site is built by aspartate 695, glutamate 716, and asparagine 718. The Mn(2+) site is built by aspartate 695, glutamate 716, and asparagine 718.

This sequence in the N-terminal section; belongs to the glutamate--cysteine ligase type 1 family. Type 2 subfamily. In terms of assembly, monomer. Mg(2+) serves as cofactor. It depends on Mn(2+) as a cofactor.

It carries out the reaction L-cysteine + L-glutamate + ATP = gamma-L-glutamyl-L-cysteine + ADP + phosphate + H(+). The enzyme catalyses gamma-L-glutamyl-L-cysteine + glycine + ATP = glutathione + ADP + phosphate + H(+). It functions in the pathway sulfur metabolism; glutathione biosynthesis; glutathione from L-cysteine and L-glutamate: step 1/2. The protein operates within sulfur metabolism; glutathione biosynthesis; glutathione from L-cysteine and L-glutamate: step 2/2. Functionally, synthesizes glutathione from L-glutamate and L-cysteine via gamma-L-glutamyl-L-cysteine. This Streptococcus thermophilus (strain ATCC BAA-250 / LMG 18311) protein is Glutathione biosynthesis bifunctional protein GshAB.